A 470-amino-acid polypeptide reads, in one-letter code: Poly(A) polymerase catalytic subunit (470 aa).

Residues aspartate 192 and aspartate 194 contribute to the active site.

This sequence belongs to the poxviridae poly(A) polymerase catalytic subunit family. As to quaternary structure, heterodimer of a large (catalytic) subunit and a small (regulatory) subunit.

The enzyme catalyses RNA(n) + ATP = RNA(n)-3'-adenine ribonucleotide + diphosphate. In terms of biological role, polymerase that creates the 3'-poly(A) tail of mRNA's. This Deerpox virus (strain Mule deer/United States/W-848-83/1983) (DPV) protein is Poly(A) polymerase catalytic subunit (PAPL).